Consider the following 497-residue polypeptide: L-carnitine dehydrogenase/betainyl-CoA thioesterase (497 aa).

The L-carnitine dehydrogenase stretch occupies residues 1–335 (MSFITKAACV…AKLWANARKP (335 aa)). 11–16 (GGGVIG) contacts NAD(+). Residues 330–335 (ANARKP) form an important for dehydrogenase activity region. The interval 336–497 (EADLGDVKPL…AGRFVGQKRA (162 aa)) is betainyl-CoA thioesterase.

This sequence in the N-terminal section; belongs to the 3-hydroxyacyl-CoA dehydrogenase family. L-carnitine dehydrogenase subfamily. The protein in the C-terminal section; belongs to the betainyl-CoA thioesterase family. As to quaternary structure, homodimer.

The protein resides in the cytoplasm. The catalysed reaction is carnitine + NAD(+) = 3-dehydrocarnitine + NADH + H(+). It carries out the reaction N,N,N-trimethylglycyl-CoA + H2O = glycine betaine + CoA + H(+). The protein operates within amine and polyamine metabolism; carnitine metabolism. Functionally, catalyzes the NAD(+)-dependent oxidation of L-carnitine to 3-dehydrocarnitine. Probably also catalyzes the cleavage of betainyl-CoA (N,N,N-trimethylglycyl-CoA) into glycine betaine and coenzyme A. Despite a high similarity to 3-hydroxyacyl-CoA dehydrogenases, cannot dehydrogenate 3-hydroxybutylate and 3-hydroxybutyl-CoA. Is probably involved in a L-carnitine degradation pathway that allows Rhizobium sp. YS-240 to grow on L-carnitine as the sole source of carbon and nitrogen. The sequence is that of L-carnitine dehydrogenase/betainyl-CoA thioesterase from Rhizobium sp.